Here is a 1243-residue protein sequence, read N- to C-terminus: Protein MMS22-like (1243 aa).

The protein belongs to the MMS22 family. MMS22L subfamily. As to quaternary structure, component of the MMS22L-TONSL complex, a complex at least composed of MMS22L and TONSL/NFKBIL2. Interacts with RAD51; interaction is direct. Post-translationally, degraded by the ubiquitin-proteasome system upon replication stress.

The protein localises to the nucleus. It localises to the chromosome. In terms of biological role, component of the MMS22L-TONSL complex, a complex that promotes homologous recombination-mediated repair of double-strand breaks (DSBs) at stalled or collapsed replication forks. The MMS22L-TONSL complex is required to maintain genome integrity during DNA replication. It mediates the assembly of RAD51 filaments on single-stranded DNA (ssDNA): the MMS22L-TONSL complex is recruited to DSBs following histone replacement by histone chaperones and eviction of the replication protein A complex (RPA/RP-A) from DSBs. Following recruitment to DSBs, the TONSL-MMS22L complex promotes recruitment of RAD51 filaments and subsequent homologous recombination. Within the complex, MMS22L acts by binding ssDNA. The sequence is that of Protein MMS22-like from Homo sapiens (Human).